The following is a 528-amino-acid chain: ATP synthase F(1) complex catalytic subunit beta, mitochondrial (528 aa).

The N-terminal 46 residues, 1–46, are a transit peptide targeting the mitochondrion; sequence MLGLVGRVVAASASGALRGLSPSAPLPQAQLLLRAAPAALQPARDY. An O-linked (GlcNAc) serine glycan is attached at Ser106. Lys124 and Lys161 each carry N6-acetyllysine; alternate. Residues Lys124 and Lys161 each carry the N6-succinyllysine; alternate modification. Lys198 carries the N6-acetyllysine modification. ADP-binding residues include Gly209, Val210, Gly211, Lys212, Thr213, and Val214. Gly209 provides a ligand contact to ATP. The phosphate site is built by Gly209, Val210, Gly211, Lys212, and Thr213. The ATP site is built by Gly211, Lys212, Thr213, and Val214. Residue Thr213 coordinates Mg(2+). Position 238 (Glu238) interacts with Mg(2+). Arg239 lines the ATP pocket. 2 positions are modified to N6-acetyllysine; alternate: Lys259 and Lys264. Residues Lys259 and Lys264 each carry the N6-succinyllysine; alternate modification. Thr312 bears the Phosphothreonine mark. Residue Ser415 is modified to Phosphoserine. Lys426 carries the N6-acetyllysine modification. Position 433 is a phosphoserine (Ser433). N6-acetyllysine occurs at positions 480 and 485. At Lys522 the chain carries N6-acetyllysine; alternate. Lys522 carries the N6-succinyllysine; alternate modification.

The protein belongs to the ATPase alpha/beta chains family. Homotrimer. Component of the ATP synthase complex composed at least of ATP5F1A/subunit alpha, ATP5F1B/subunit beta, ATP5MC1/subunit c (homooctomer), MT-ATP6/subunit a, MT-ATP8/subunit 8, ATP5ME/subunit e, ATP5MF/subunit f, ATP5MG/subunit g, ATP5MK/subunit k, ATP5MJ/subunit j, ATP5F1C/subunit gamma, ATP5F1D/subunit delta, ATP5F1E/subunit epsilon, ATP5PF/subunit F6, ATP5PB/subunit b, ATP5PD/subunit d, ATP5PO/subunit OSCP. ATP synthase complex consists of a soluble F(1) head domain (subunits alpha(3) and beta(3)) - the catalytic core - and a membrane F(0) domain - the membrane proton channel (subunits c, a, 8, e, f, g, k and j). These two domains are linked by a central stalk (subunits gamma, delta, and epsilon) rotating inside the F1 region and a stationary peripheral stalk (subunits F6, b, d, and OSCP). Interacts with PPIF. Interacts with BCL2L1 isoform BCL-X(L); the interaction mediates the association of BCL2L1 isoform BCL-X(L) with the mitochondrial membrane F(1)F(0) ATP synthase and enhances neurons metabolic efficiency. Interacts with CLN5 and PPT1. Interacts with S100A1; this interaction increases F1-ATPase activity. Interacts with MTLN. Interacts with TTC5/STRAP; the interaction results in decreased mitochondrial ATP production.

The protein localises to the mitochondrion inner membrane. It carries out the reaction ATP + H2O + 4 H(+)(in) = ADP + phosphate + 5 H(+)(out). Its function is as follows. Catalytic subunit beta, of the mitochondrial membrane ATP synthase complex (F(1)F(0) ATP synthase or Complex V) that produces ATP from ADP in the presence of a proton gradient across the membrane which is generated by electron transport complexes of the respiratory chain. ATP synthase complex consist of a soluble F(1) head domain - the catalytic core - and a membrane F(1) domain - the membrane proton channel. These two domains are linked by a central stalk rotating inside the F(1) region and a stationary peripheral stalk. During catalysis, ATP synthesis in the catalytic domain of F(1) is coupled via a rotary mechanism of the central stalk subunits to proton translocation. In vivo, can only synthesize ATP although its ATP hydrolase activity can be activated artificially in vitro. With the subunit alpha (ATP5F1A), forms the catalytic core in the F(1) domain. This is ATP synthase F(1) complex catalytic subunit beta, mitochondrial from Bos taurus (Bovine).